We begin with the raw amino-acid sequence, 215 residues long: ATP phosphoribosyltransferase (215 aa).

It belongs to the ATP phosphoribosyltransferase family. Short subfamily. Heteromultimer composed of HisG and HisZ subunits.

The protein localises to the cytoplasm. It carries out the reaction 1-(5-phospho-beta-D-ribosyl)-ATP + diphosphate = 5-phospho-alpha-D-ribose 1-diphosphate + ATP. Its pathway is amino-acid biosynthesis; L-histidine biosynthesis; L-histidine from 5-phospho-alpha-D-ribose 1-diphosphate: step 1/9. In terms of biological role, catalyzes the condensation of ATP and 5-phosphoribose 1-diphosphate to form N'-(5'-phosphoribosyl)-ATP (PR-ATP). Has a crucial role in the pathway because the rate of histidine biosynthesis seems to be controlled primarily by regulation of HisG enzymatic activity. The sequence is that of ATP phosphoribosyltransferase from Prochlorococcus marinus (strain MIT 9215).